The following is a 61-amino-acid chain: Photosystem II reaction center protein K (61 aa).

Positions M1 to A24 are excised as a propeptide. Residues I36–A56 form a helical membrane-spanning segment.

This sequence belongs to the PsbK family. In terms of assembly, PSII is composed of 1 copy each of membrane proteins PsbA, PsbB, PsbC, PsbD, PsbE, PsbF, PsbH, PsbI, PsbJ, PsbK, PsbL, PsbM, PsbT, PsbX, PsbY, PsbZ, Psb30/Ycf12, at least 3 peripheral proteins of the oxygen-evolving complex and a large number of cofactors. It forms dimeric complexes.

It localises to the plastid. Its subcellular location is the chloroplast thylakoid membrane. Functionally, one of the components of the core complex of photosystem II (PSII). PSII is a light-driven water:plastoquinone oxidoreductase that uses light energy to abstract electrons from H(2)O, generating O(2) and a proton gradient subsequently used for ATP formation. It consists of a core antenna complex that captures photons, and an electron transfer chain that converts photonic excitation into a charge separation. In Gossypium barbadense (Sea Island cotton), this protein is Photosystem II reaction center protein K.